A 1217-amino-acid polypeptide reads, in one-letter code: MIDVNKFESMQIGLASPEKIRSWSYGEVKKPETINYRTLKPEREGLFCERIFGPTKDWECACGKYKRIRYKGIVCDRCGVEVTRSKVRRERMGHIELAAPVSHIWYFKGIPSRMGLVLDMSPRALEEVIYFASYVVIEPGDTTLEKKQLLTEREYREKREQYGQAFKAAMGAEAVKQLLDNVDLDGEVAQLKEELKTASGQKRTRAIRRLDILEAFRASGNQPSWMVMDVIPVIPPDLRPMVQLEGGRFATSDLNDLYRRVINRNNRLKRLLDLNAPSIIVQNEKRMLQEAVDALIDNGRRGRPVTGPGNRPLKSLSHMLKGKQGRFRQNLLGKRVDYSGRSVIVVGPFLKMYQCGLPKEMAIELFKPFVMRELVQREIATNIKNAKRKIERGEDEVWDILEEVIQEHPVLLNRAPTLHRLGIQAFEPVLVEGRAIRLHPLVCEAYNADFDGDQMAVHVPLNEEAQAEARMLMLAAQNILNPKDGKPVVTPSQDMVLGNYYLTMEEEGREGEGMIFRDMNEAVLAWQNGYVHLHSRIGVQTTLLGDKPFTDWQKERILITTVGKIIFNEIMPVEFPYLNEPTDYNLTVQTPDKYFVEAGTDIPAHIKEQELVLPFKKKNLGNIIAEVFKRFHITETSKMLDRMKDLGYKHSTYAGMTVGIADIMVLHEKQAIIDAAHKQVETITKQFRRGLITDDERYERVIGVWNGAKDEIQQKLIESMEARNPIFMMSDSGARGNISNFTQLAGMRGLMAAPNGRIMELPIISNFREGLSVLEMFISTHGARKGMTDTALKTADSGYLTRRLVDVAQDVIIREDDCGTDRGLEIEAIREGNEIIEPLDERLLGRYTRKSVVHPETGAIIIGADQLITEDLAREIVDAGIEKVTIRSVFTCNTKHGVCKHCYGRNLATGSDVEVGEAVGTIAAQSIGEPGTQLTMRTFHTGGVAGDDITQGLPRIQEIFEARNPKGQAVITEVTGEVIDISEDPATRQKEVTIKGKTDTRTYTVPYTARMKVAEGDIIHRGAPLTEGSIDPKQLLQVRDVLSVENYLLREVQRVYRMQGVEIGDKHIEVMVRQMLRKIRVMDPGDTEILPGTLMDIAEFKDRNYDTLVAGGVPATSRPVLLGITKASLETNSFLSAASFQETTRVLTDAAIRGKKDPLLGLKENVIIGKIIPAGTGMARYRNMEPKEVGVASENVYSISDIEAQMAAEDAMKNINK.

Residues Cys-60, Cys-62, Cys-75, and Cys-78 each coordinate Zn(2+). Asp-449, Asp-451, and Asp-453 together coordinate Mg(2+). Zn(2+) is bound by residues Cys-818, Cys-892, Cys-899, and Cys-902.

The protein belongs to the RNA polymerase beta' chain family. As to quaternary structure, the RNAP catalytic core consists of 2 alpha, 1 beta, 1 beta' and 1 omega subunit. When a sigma factor is associated with the core the holoenzyme is formed, which can initiate transcription. It depends on Mg(2+) as a cofactor. Requires Zn(2+) as cofactor.

The catalysed reaction is RNA(n) + a ribonucleoside 5'-triphosphate = RNA(n+1) + diphosphate. Its function is as follows. DNA-dependent RNA polymerase catalyzes the transcription of DNA into RNA using the four ribonucleoside triphosphates as substrates. The polypeptide is DNA-directed RNA polymerase subunit beta' (Enterococcus faecalis (strain ATCC 700802 / V583)).